Reading from the N-terminus, the 89-residue chain is Large ribosomal subunit protein bL28 (89 aa).

The protein belongs to the bacterial ribosomal protein bL28 family.

The protein is Large ribosomal subunit protein bL28 of Chlamydia pneumoniae (Chlamydophila pneumoniae).